The sequence spans 264 residues: 3-methyl-2-oxobutanoate hydroxymethyltransferase (264 aa).

Positions 45 and 84 each coordinate Mg(2+). Residues 45 to 46 (DS), Asp84, and Lys112 each bind 3-methyl-2-oxobutanoate. Glu114 is a binding site for Mg(2+). The Proton acceptor role is filled by Glu181.

It belongs to the PanB family. As to quaternary structure, homodecamer; pentamer of dimers. It depends on Mg(2+) as a cofactor.

The protein localises to the cytoplasm. The catalysed reaction is 3-methyl-2-oxobutanoate + (6R)-5,10-methylene-5,6,7,8-tetrahydrofolate + H2O = 2-dehydropantoate + (6S)-5,6,7,8-tetrahydrofolate. The protein operates within cofactor biosynthesis; (R)-pantothenate biosynthesis; (R)-pantoate from 3-methyl-2-oxobutanoate: step 1/2. Functionally, catalyzes the reversible reaction in which hydroxymethyl group from 5,10-methylenetetrahydrofolate is transferred onto alpha-ketoisovalerate to form ketopantoate. The polypeptide is 3-methyl-2-oxobutanoate hydroxymethyltransferase (Vibrio atlanticus (strain LGP32) (Vibrio splendidus (strain Mel32))).